The sequence spans 67 residues: Large ribosomal subunit protein bL32c (67 aa).

Belongs to the bacterial ribosomal protein bL32 family.

It localises to the plastid. It is found in the chloroplast. This is Large ribosomal subunit protein bL32c from Chara vulgaris (Common stonewort).